Here is a 456-residue protein sequence, read N- to C-terminus: Asparagine--tRNA ligase (456 aa).

The protein belongs to the class-II aminoacyl-tRNA synthetase family. In terms of assembly, homodimer.

The protein resides in the cytoplasm. The catalysed reaction is tRNA(Asn) + L-asparagine + ATP = L-asparaginyl-tRNA(Asn) + AMP + diphosphate + H(+). This chain is Asparagine--tRNA ligase, found in Mycoplasmoides gallisepticum (strain R(low / passage 15 / clone 2)) (Mycoplasma gallisepticum).